The chain runs to 277 residues: 3-methyl-2-oxobutanoate hydroxymethyltransferase (277 aa).

Residues D43 and D82 each coordinate Mg(2+). Residues 43–44 (DS), D82, and K112 contribute to the 3-methyl-2-oxobutanoate site. E114 lines the Mg(2+) pocket. The active-site Proton acceptor is E181.

The protein belongs to the PanB family. As to quaternary structure, homodecamer; pentamer of dimers. Requires Mg(2+) as cofactor.

Its subcellular location is the cytoplasm. It catalyses the reaction 3-methyl-2-oxobutanoate + (6R)-5,10-methylene-5,6,7,8-tetrahydrofolate + H2O = 2-dehydropantoate + (6S)-5,6,7,8-tetrahydrofolate. It functions in the pathway cofactor biosynthesis; (R)-pantothenate biosynthesis; (R)-pantoate from 3-methyl-2-oxobutanoate: step 1/2. Functionally, catalyzes the reversible reaction in which hydroxymethyl group from 5,10-methylenetetrahydrofolate is transferred onto alpha-ketoisovalerate to form ketopantoate. The polypeptide is 3-methyl-2-oxobutanoate hydroxymethyltransferase (Listeria monocytogenes serovar 1/2a (strain ATCC BAA-679 / EGD-e)).